We begin with the raw amino-acid sequence, 396 residues long: Beta-peptidyl aminopeptidase BapA (396 aa).

The signal sequence occupies residues 1–21; it reads MHYLKFPAIIAGMLLAGAASA. The active-site Nucleophile is the serine 271. Active-site proton donor/acceptor residues include serine 309 and aspartate 311.

This sequence belongs to the peptidase S58 family. In terms of assembly, heterooctamer of 4 heterodimers ((alpha:beta)4); each heterodimer is composed of an alpha subunit and a beta subunit processed from the same precursor. Post-translationally, autoproteolytic processing to generate the alpha and beta subunit is required for self-activation and is proposed to use a similar mechanism as substrate cleavage.

It is found in the periplasm. The enzyme catalyses Cleaves N-terminal beta-homoamino acids from peptides composed of 2 to 6 amino acids.. With respect to regulation, inhibited by AEBSF (4-(2-aminoethyl)benzenesulfonyl fluoride, Pefabloc SC). In terms of biological role, beta-aminopeptidase that can cleave synthetic beta-peptides which consist of backbone-elongated beta-amino acid residues that are not processed by common proteolytic enzymes. Can cleave the beta-peptides beta-homoVal-beta-homoAla-beta-homoLeu and beta-homoAla-beta-homoLeu. Requires a beta-amino acid at the N-terminus of peptide substrates and cleaves the peptide bond between the N-terminal beta-amino acid and the amino acid at the second position of tripeptidic substrates of the general structure H-betahXaa-Ile-betahTyr-OH according to the following preferences with regard to the side chain of the N-terminal beta-amino acid: aliphatic and aromatic &gt; OH-containing &gt; hydrogen, basic and polar. beta-homoVal-beta-homoAla-beta-homoLeu and beta-homoAla-beta-homoLeu. This chain is Beta-peptidyl aminopeptidase BapA, found in Sphingosinicella microcystinivorans.